The sequence spans 197 residues: Small ribosomal subunit protein uS4 (197 aa).

The region spanning Ser-87 to Lys-147 is the S4 RNA-binding domain.

It belongs to the universal ribosomal protein uS4 family. As to quaternary structure, part of the 30S ribosomal subunit. Contacts protein S5. The interaction surface between S4 and S5 is involved in control of translational fidelity.

In terms of biological role, one of the primary rRNA binding proteins, it binds directly to 16S rRNA where it nucleates assembly of the body of the 30S subunit. With S5 and S12 plays an important role in translational accuracy. In Agathobacter rectalis (strain ATCC 33656 / DSM 3377 / JCM 17463 / KCTC 5835 / VPI 0990) (Eubacterium rectale), this protein is Small ribosomal subunit protein uS4.